The sequence spans 377 residues: Compound eye opsin BCRH1 (377 aa).

At 1-53 the chain is on the extracellular side; sequence MANVTGPQMAFYGSGAATFGYPEGMTVADFVPDRVKHMVLDHWYNYPPVNPMW. Asn-3 is a glycosylation site (N-linked (GlcNAc...) asparagine). Residues 54–78 form a helical membrane-spanning segment; the sequence is HYLLGVVYLFLGVISIAGNGLVIYL. Residues 79–90 are Cytoplasmic-facing; sequence YMKSQALKTPAN. Residues 91 to 115 form a helical membrane-spanning segment; the sequence is MLIVNLALSDLIMLTTNFPPFCYNC. Topologically, residues 116 to 131 are extracellular; sequence FSGGRWMFSGTYCEIY. Residues Cys-128 and Cys-205 are joined by a disulfide bond. Residues 132 to 151 traverse the membrane as a helical segment; it reads AALGAITGVCSIWTLCMISF. The Cytoplasmic portion of the chain corresponds to 152 to 170; that stretch reads DRYNIICNGFNGPKLTQGK. The helical transmembrane segment at 171 to 194 threads the bilayer; it reads ATFMCGLAWVISVGWSLPPFFGWG. Topologically, residues 195–218 are extracellular; that stretch reads SYTLEGILDSCSYDYFTRDMNTIT. The helical transmembrane segment at 219 to 246 threads the bilayer; that stretch reads YNICIFIFDFFLPASVIVFSYVFIVKAI. At 247-281 the chain is on the cytoplasmic side; it reads FAHEAAMRAQAKKMNVTNLRSNEAETQRAEIRIAK. A helical membrane pass occupies residues 282-305; that stretch reads TALVNVSLWFICWTPYAAITIQGL. Residues 306-313 are Extracellular-facing; it reads LGNAEGIT. The helical transmembrane segment at 314–338 threads the bilayer; the sequence is PLLTTLPALLAKSCSCYNPFVYAIS. Lys-325 is modified (N6-(retinylidene)lysine). Residues 339 to 377 lie on the Cytoplasmic side of the membrane; sequence HPKFRLAITQHLPWFCVHEKDPNDVEENQSSNTQTQEKS.

This sequence belongs to the G-protein coupled receptor 1 family. Opsin subfamily. Post-translationally, phosphorylated on some or all of the serine and threonine residues present in the C-terminal region. As to expression, expressed in all of the seven retinular cells (R1-R7) forming the main rhabdom in each ommatidium.

The protein resides in the membrane. Visual pigments are the light-absorbing molecules that mediate vision. They consist of an apoprotein, opsin, covalently linked to cis-retinal. This opsin produces visual pigments with maximal absorption in the blue-green region of the spectrum. This Hemigrapsus sanguineus (Asian shore crab) protein is Compound eye opsin BCRH1.